The chain runs to 270 residues: Phospholysine phosphohistidine inorganic pyrophosphate phosphatase (270 aa).

The Mg(2+) site is built by aspartate 14 and serine 16. Substrate is bound by residues 14–16 (DVS), 52–53 (TN), and lysine 187. Aspartate 212 lines the Mg(2+) pocket.

It belongs to the HAD-like hydrolase superfamily. Mg(2+) serves as cofactor.

It is found in the cytoplasm. The protein resides in the nucleus. It catalyses the reaction diphosphate + H2O = 2 phosphate + H(+). In terms of biological role, phosphatase that hydrolyzes imidodiphosphate, 3-phosphohistidine and 6-phospholysine. Has broad substrate specificity and can also hydrolyze inorganic diphosphate, but with lower efficiency. The polypeptide is Phospholysine phosphohistidine inorganic pyrophosphate phosphatase (lhpp) (Xenopus laevis (African clawed frog)).